A 276-amino-acid polypeptide reads, in one-letter code: Diaminopimelate epimerase (276 aa).

Substrate is bound by residues Asn13, Gln46, and Asn66. Residue Cys75 is the Proton donor of the active site. Substrate contacts are provided by residues 76-77 (GN), Asn159, Asn192, and 210-211 (ER). Cys219 acts as the Proton acceptor in catalysis. 220–221 (GT) lines the substrate pocket.

Belongs to the diaminopimelate epimerase family. In terms of assembly, homodimer.

It is found in the cytoplasm. The enzyme catalyses (2S,6S)-2,6-diaminopimelate = meso-2,6-diaminopimelate. It participates in amino-acid biosynthesis; L-lysine biosynthesis via DAP pathway; DL-2,6-diaminopimelate from LL-2,6-diaminopimelate: step 1/1. Its function is as follows. Catalyzes the stereoinversion of LL-2,6-diaminopimelate (L,L-DAP) to meso-diaminopimelate (meso-DAP), a precursor of L-lysine and an essential component of the bacterial peptidoglycan. This Cellvibrio japonicus (strain Ueda107) (Pseudomonas fluorescens subsp. cellulosa) protein is Diaminopimelate epimerase.